Reading from the N-terminus, the 101-residue chain is MNKSKRPFTKSKRSFRRRLPPIQSGDRIDYRNMSLISRFISEQGKILSRRVNRVTLKQQRLITMAIKQARILSLLPFLNNQKQFERSESTPRTTSLRTRKK.

Positions 1–19 (MNKSKRPFTKSKRSFRRRL) are enriched in basic residues. Positions 1–20 (MNKSKRPFTKSKRSFRRRLP) are disordered.

Belongs to the bacterial ribosomal protein bS18 family. In terms of assembly, part of the 30S ribosomal subunit.

The protein localises to the plastid. Its subcellular location is the chloroplast. This is Small ribosomal subunit protein bS18c from Arabis hirsuta (Hairy rock-cress).